Consider the following 330-residue polypeptide: Methionine import ATP-binding protein MetN (330 aa).

The ABC transporter domain maps to 2–241; that stretch reads IAFRGVSKVY…PSTRLHQLCF (240 aa). 38–45 is an ATP binding site; sequence GQSGAGKS.

Belongs to the ABC transporter superfamily. Methionine importer (TC 3.A.1.24) family. As to quaternary structure, the complex is composed of two ATP-binding proteins (MetN), two transmembrane proteins (MetI) and a solute-binding protein (MetQ).

The protein resides in the cell inner membrane. The catalysed reaction is L-methionine(out) + ATP + H2O = L-methionine(in) + ADP + phosphate + H(+). The enzyme catalyses D-methionine(out) + ATP + H2O = D-methionine(in) + ADP + phosphate + H(+). Part of the ABC transporter complex MetNIQ involved in methionine import. Responsible for energy coupling to the transport system. The sequence is that of Methionine import ATP-binding protein MetN from Myxococcus xanthus (strain DK1622).